A 71-amino-acid chain; its full sequence is Small ribosomal subunit protein bS18 (71 aa).

The protein belongs to the bacterial ribosomal protein bS18 family. In terms of assembly, part of the 30S ribosomal subunit. Forms a tight heterodimer with protein bS6.

Functionally, binds as a heterodimer with protein bS6 to the central domain of the 16S rRNA, where it helps stabilize the platform of the 30S subunit. This chain is Small ribosomal subunit protein bS18, found in Microcystis aeruginosa (strain NIES-843 / IAM M-2473).